We begin with the raw amino-acid sequence, 454 residues long: Ribosomal protein uS12 methylthiotransferase RimO (454 aa).

In terms of domain architecture, MTTase N-terminal spans 14-125; sequence SKVAFSHVGC…IAKVLDRVEK (112 aa). [4Fe-4S] cluster is bound by residues Cys-23, Cys-59, Cys-88, Cys-163, Cys-167, and Cys-170. The 230-residue stretch at 149 to 378 folds into the Radical SAM core domain; the sequence is DKNKFVAYLR…ISVQQNISKD (230 aa). Positions 381-452 constitute a TRAM domain; that stretch reads QSYVGSKMKI…EYDLYGETIK (72 aa).

It belongs to the methylthiotransferase family. RimO subfamily. Requires [4Fe-4S] cluster as cofactor.

Its subcellular location is the cytoplasm. The catalysed reaction is L-aspartate(89)-[ribosomal protein uS12]-hydrogen + (sulfur carrier)-SH + AH2 + 2 S-adenosyl-L-methionine = 3-methylsulfanyl-L-aspartate(89)-[ribosomal protein uS12]-hydrogen + (sulfur carrier)-H + 5'-deoxyadenosine + L-methionine + A + S-adenosyl-L-homocysteine + 2 H(+). Its function is as follows. Catalyzes the methylthiolation of an aspartic acid residue of ribosomal protein uS12. The chain is Ribosomal protein uS12 methylthiotransferase RimO from Prochlorococcus marinus (strain MIT 9312).